Here is a 475-residue protein sequence, read N- to C-terminus: Ribulose bisphosphate carboxylase large chain (475 aa).

A propeptide spanning residues Met-1 to Ser-2 is cleaved from the precursor. N-acetylproline is present on Pro-3. The residue at position 14 (Lys-14) is an N6,N6,N6-trimethyllysine. Positions 123 and 173 each coordinate substrate. Residue Lys-175 is the Proton acceptor of the active site. A substrate-binding site is contributed by Lys-177. Lys-201, Asp-203, and Glu-204 together coordinate Mg(2+). At Lys-201 the chain carries N6-carboxylysine. The active-site Proton acceptor is the His-294. The substrate site is built by Arg-295, His-327, and Ser-379.

Belongs to the RuBisCO large chain family. Type I subfamily. In terms of assembly, heterohexadecamer of 8 large chains and 8 small chains; disulfide-linked. The disulfide link is formed within the large subunit homodimers. Requires Mg(2+) as cofactor. Post-translationally, the disulfide bond which can form in the large chain dimeric partners within the hexadecamer appears to be associated with oxidative stress and protein turnover.

The protein localises to the plastid. It localises to the chloroplast. The enzyme catalyses 2 (2R)-3-phosphoglycerate + 2 H(+) = D-ribulose 1,5-bisphosphate + CO2 + H2O. It carries out the reaction D-ribulose 1,5-bisphosphate + O2 = 2-phosphoglycolate + (2R)-3-phosphoglycerate + 2 H(+). RuBisCO catalyzes two reactions: the carboxylation of D-ribulose 1,5-bisphosphate, the primary event in carbon dioxide fixation, as well as the oxidative fragmentation of the pentose substrate in the photorespiration process. Both reactions occur simultaneously and in competition at the same active site. In Adiantum capillus-veneris (Maidenhair fern), this protein is Ribulose bisphosphate carboxylase large chain.